The primary structure comprises 434 residues: MTDFSPREIVSELDRFIVGQTDAKRAVSIALRNRWRRQQLEGSLREEVLPKNILMIGPTGVGKTEIARRLAKLANAPFLKVEATKFTEVGYVGRDVEQIVRDLVEVAIAQVRERKRKDVQARAQLAAEERVLDALVGANASSATRESFRKKLRAGELNDKEIEIETQSSGGGMPMFEIPGMPGAQMGAISIGDIFGKLGGRSKTRRLTVESSHEILINEESDKLLDTEQLTLEAISAVENNGIVFLDEIDKICARDGRVGGDVSREGVQRDLLPLIEGTTVSTKHGAVKTDHILFIASGAFHVAKPSDLLPELQGRLPIRVELQALTRDDMRRILTEPEASLIKQYVALMQTEGVTLDITDNAIDALADVAVAVNSTVENIGARRLQTVMERVLDEISFTAPDRNGETIRVDADFVQKHVGDLAKNADLSRFIL.

Residues V18, 60 to 65 (GVGKTE), D247, E312, and R384 contribute to the ATP site.

It belongs to the ClpX chaperone family. HslU subfamily. As to quaternary structure, a double ring-shaped homohexamer of HslV is capped on each side by a ring-shaped HslU homohexamer. The assembly of the HslU/HslV complex is dependent on binding of ATP.

The protein resides in the cytoplasm. Its function is as follows. ATPase subunit of a proteasome-like degradation complex; this subunit has chaperone activity. The binding of ATP and its subsequent hydrolysis by HslU are essential for unfolding of protein substrates subsequently hydrolyzed by HslV. HslU recognizes the N-terminal part of its protein substrates and unfolds these before they are guided to HslV for hydrolysis. The polypeptide is ATP-dependent protease ATPase subunit HslU (Bradyrhizobium diazoefficiens (strain JCM 10833 / BCRC 13528 / IAM 13628 / NBRC 14792 / USDA 110)).